The primary structure comprises 235 residues: Aspartate/glutamate leucyltransferase (235 aa).

It belongs to the R-transferase family. Bpt subfamily.

Its subcellular location is the cytoplasm. It catalyses the reaction N-terminal L-glutamyl-[protein] + L-leucyl-tRNA(Leu) = N-terminal L-leucyl-L-glutamyl-[protein] + tRNA(Leu) + H(+). The enzyme catalyses N-terminal L-aspartyl-[protein] + L-leucyl-tRNA(Leu) = N-terminal L-leucyl-L-aspartyl-[protein] + tRNA(Leu) + H(+). In terms of biological role, functions in the N-end rule pathway of protein degradation where it conjugates Leu from its aminoacyl-tRNA to the N-termini of proteins containing an N-terminal aspartate or glutamate. The sequence is that of Aspartate/glutamate leucyltransferase from Pseudomonas syringae pv. syringae (strain B728a).